The chain runs to 330 residues: L-asparaginase (330 aa).

Residues 4–330 (PQVTILATGG…EAIQKIFSTY (327 aa)) enclose the Asparaginase/glutaminase domain. The O-isoaspartyl threonine intermediate role is filled by threonine 14. 93–94 (TD) provides a ligand contact to substrate.

This sequence belongs to the asparaginase 1 family. As to quaternary structure, homotetramer.

It is found in the cytoplasm. The catalysed reaction is L-asparagine + H2O = L-aspartate + NH4(+). This chain is L-asparaginase (ansA), found in Wolinella succinogenes (strain ATCC 29543 / DSM 1740 / CCUG 13145 / JCM 31913 / LMG 7466 / NCTC 11488 / FDC 602W) (Vibrio succinogenes).